Here is a 78-residue protein sequence, read N- to C-terminus: Sec-independent protein translocase protein TatA (78 aa).

A helical membrane pass occupies residues 1-21 (MGGISIWQLLIIAVIVVLLFG). Over residues 47 to 59 (ESEKKDADFEPKS) the composition is skewed to basic and acidic residues. The tract at residues 47–78 (ESEKKDADFEPKSLEQQNKQAATESKKDKEQA) is disordered. Residues 60-69 (LEQQNKQAAT) are compositionally biased toward polar residues.

It belongs to the TatA/E family. In terms of assembly, the Tat system comprises two distinct complexes: a TatABC complex, containing multiple copies of TatA, TatB and TatC subunits, and a separate TatA complex, containing only TatA subunits. Substrates initially bind to the TatABC complex, which probably triggers association of the separate TatA complex to form the active translocon.

It is found in the cell inner membrane. In terms of biological role, part of the twin-arginine translocation (Tat) system that transports large folded proteins containing a characteristic twin-arginine motif in their signal peptide across membranes. TatA could form the protein-conducting channel of the Tat system. The sequence is that of Sec-independent protein translocase protein TatA from Vibrio vulnificus (strain YJ016).